The chain runs to 229 residues: Transmembrane protein 217 (229 aa).

A helical transmembrane segment spans residues 13 to 33; sequence MGTVLSGVFTIMAVDMYLIFE. Asn39 carries an N-linked (GlcNAc...) asparagine glycan. 3 helical membrane-spanning segments follow: residues 67-87, 94-114, and 129-149; these read IVLF…YSVY, LVIY…IQIL, and WFGL…VINY. N-linked (GlcNAc...) asparagine glycosylation occurs at Asn156.

The protein resides in the membrane. This chain is Transmembrane protein 217 (TMEM217), found in Homo sapiens (Human).